The following is a 309-amino-acid chain: Homoserine kinase (309 aa).

An ATP-binding site is contributed by 91 to 101 (PIGSGLGSSAC).

This sequence belongs to the GHMP kinase family. Homoserine kinase subfamily.

It localises to the cytoplasm. It catalyses the reaction L-homoserine + ATP = O-phospho-L-homoserine + ADP + H(+). It functions in the pathway amino-acid biosynthesis; L-threonine biosynthesis; L-threonine from L-aspartate: step 4/5. Functionally, catalyzes the ATP-dependent phosphorylation of L-homoserine to L-homoserine phosphate. This Cronobacter sakazakii (strain ATCC BAA-894) (Enterobacter sakazakii) protein is Homoserine kinase.